The primary structure comprises 92 residues: Small cysteine and glycine repeat-containing protein 9 (92 aa).

The tract at residues 4 to 72 (CGCGSCGCSG…CCRRTCSSCG (69 aa)) is 11 X 2 AA repeats of CG.

This sequence belongs to the KRTAP type 28 family.

In terms of biological role, in the hair cortex, hair keratin intermediate filaments are embedded in an interfilamentous matrix, consisting of hair keratin-associated proteins (KRTAP), which are essential for the formation of a rigid and resistant hair shaft through their extensive disulfide bond cross-linking with abundant cysteine residues of hair keratins. The matrix proteins include the high-sulfur and high-glycine-tyrosine keratins. This is Small cysteine and glycine repeat-containing protein 9 from Homo sapiens (Human).